Reading from the N-terminus, the 500-residue chain is Aldehyde dehydrogenase, mitochondrial (500 aa).

N6-acetyllysine occurs at positions 35, 56, 61, and 142. An NAD(+)-binding site is contributed by 245 to 250 (GSTEVG). The active-site Proton acceptor is the E268. The Nucleophile role is filled by C302. N6-acetyllysine occurs at positions 351, 358, 366, 390, 409, 411, 424, and 434.

This sequence belongs to the aldehyde dehydrogenase family. As to quaternary structure, homotetramer. In terms of processing, in response to mitochondrial stress, the precursor protein is ubiquitinated by the SIFI complex in the cytoplasm before mitochondrial import, leading to its degradation. Within the SIFI complex, UBR4 initiates ubiquitin chain that are further elongated or branched by KCMF1.

Its subcellular location is the mitochondrion matrix. The enzyme catalyses an aldehyde + NAD(+) + H2O = a carboxylate + NADH + 2 H(+). It functions in the pathway alcohol metabolism; ethanol degradation; acetate from ethanol: step 2/2. In terms of biological role, required for clearance of cellular formaldehyde, a cytotoxic and carcinogenic metabolite that induces DNA damage. The chain is Aldehyde dehydrogenase, mitochondrial (ALDH2) from Mesocricetus auratus (Golden hamster).